The sequence spans 345 residues: 4-hydroxy-2-oxovalerate aldolase 3 (345 aa).

The region spanning 8-260 (ITVHDMTLRD…ETGVDVWKIQ (253 aa)) is the Pyruvate carboxyltransferase domain. Residue 16–17 (RD) coordinates substrate. Asp-17 serves as a coordination point for Mn(2+). The Proton acceptor role is filled by His-20. Substrate-binding residues include Ser-170 and His-199. Positions 199 and 201 each coordinate Mn(2+). Tyr-290 provides a ligand contact to substrate.

It belongs to the 4-hydroxy-2-oxovalerate aldolase family.

The enzyme catalyses (S)-4-hydroxy-2-oxopentanoate = acetaldehyde + pyruvate. This is 4-hydroxy-2-oxovalerate aldolase 3 (aphG) from Comamonas testosteroni (Pseudomonas testosteroni).